The primary structure comprises 152 residues: Large ribosomal subunit protein uL15 (152 aa).

Residues 1 to 12 are compositionally biased toward polar residues; that stretch reads MTSTLNTLKSNT. The tract at residues 1–57 is disordered; the sequence is MTSTLNTLKSNTGSRKKKLRKGRGIAAGQGASCGFGMRGQKSRSGRPTRPGFEGGQM. Basic residues predominate over residues 14–23; the sequence is SRKKKLRKGR. Gly residues predominate over residues 25–37; that stretch reads IAAGQGASCGFGM.

It belongs to the universal ribosomal protein uL15 family. In terms of assembly, part of the 50S ribosomal subunit.

In terms of biological role, binds to the 23S rRNA. The chain is Large ribosomal subunit protein uL15 from Prochlorococcus marinus subsp. pastoris (strain CCMP1986 / NIES-2087 / MED4).